The chain runs to 678 residues: DNA ligase (678 aa).

Residues 47 to 51, 96 to 97, and E122 contribute to the NAD(+) site; these read DSDYD and SL. K124 functions as the N6-AMP-lysine intermediate in the catalytic mechanism. NAD(+) is bound by residues R145, E182, K300, and K324. C418, C421, C436, and C442 together coordinate Zn(2+). In terms of domain architecture, BRCT spans 602 to 678; it reads AYNESFTGKT…ILEDNLKDLL (77 aa).

This sequence belongs to the NAD-dependent DNA ligase family. LigA subfamily. It depends on Mg(2+) as a cofactor. Requires Mn(2+) as cofactor.

It catalyses the reaction NAD(+) + (deoxyribonucleotide)n-3'-hydroxyl + 5'-phospho-(deoxyribonucleotide)m = (deoxyribonucleotide)n+m + AMP + beta-nicotinamide D-nucleotide.. Functionally, DNA ligase that catalyzes the formation of phosphodiester linkages between 5'-phosphoryl and 3'-hydroxyl groups in double-stranded DNA using NAD as a coenzyme and as the energy source for the reaction. It is essential for DNA replication and repair of damaged DNA. This Francisella tularensis subsp. tularensis (strain SCHU S4 / Schu 4) protein is DNA ligase.